The chain runs to 174 residues: Ribosome maturation factor RimP (174 aa).

Belongs to the RimP family.

It is found in the cytoplasm. In terms of biological role, required for maturation of 30S ribosomal subunits. The chain is Ribosome maturation factor RimP from Acinetobacter baylyi (strain ATCC 33305 / BD413 / ADP1).